Reading from the N-terminus, the 363-residue chain is Serpentine receptor class beta-18 (363 aa).

The next 7 membrane-spanning stretches (helical) occupy residues 52–72 (LAQFSHVVFSFMGLIIVVVYI), 92–112 (MLLFIVAHSIDMIVLHIYHII), 135–155 (FRYTFSFCSMGLAICTYCIYI), 172–192 (LILAAQICQLIVISSLIIIWV), 218–238 (KATIAVFPINFICFFLSIGLF), 276–296 (AALMALFSVASLLMRLVYNFL), and 303–323 (TIATLSYIMSIYCFTVPLVIV).

This sequence belongs to the nematode receptor-like protein srb family.

It is found in the membrane. The sequence is that of Serpentine receptor class beta-18 (srb-18) from Caenorhabditis elegans.